A 484-amino-acid chain; its full sequence is Diaminopimelate decarboxylase 1, chloroplastic (484 aa).

A compositionally biased stretch (polar residues) spans 1-28; it reads MAAATQFLSQPSSLNPHQLKNQTSQRSR. The disordered stretch occupies residues 1-30; sequence MAAATQFLSQPSSLNPHQLKNQTSQRSRSI. Residues 1 to 49 constitute a chloroplast transit peptide; sequence MAAATQFLSQPSSLNPHQLKNQTSQRSRSIPVLSLKSTLKPLKRLSVKA. An N-acetylalanine modification is found at Ala50. Lys125 is subject to N6-(pyridoxal phosphate)lysine. Residues Gly304 and 340-343 each bind pyridoxal 5'-phosphate; that span reads EPGR. The substrate site is built by Arg343, Arg379, and Tyr383. Cys411 serves as the catalytic Proton donor. Residues Glu412 and Tyr440 each coordinate substrate. A pyridoxal 5'-phosphate-binding site is contributed by Tyr440.

It belongs to the Orn/Lys/Arg decarboxylase class-II family. LysA subfamily. As to quaternary structure, homodimer. Pyridoxal 5'-phosphate serves as cofactor.

The protein resides in the plastid. It localises to the chloroplast. It catalyses the reaction meso-2,6-diaminopimelate + H(+) = L-lysine + CO2. It participates in amino-acid biosynthesis; L-lysine biosynthesis via DAP pathway; L-lysine from DL-2,6-diaminopimelate: step 1/1. Its function is as follows. Specifically catalyzes the decarboxylation of meso-diaminopimelate (meso-DAP) to L-lysine. The sequence is that of Diaminopimelate decarboxylase 1, chloroplastic (LYSA1) from Arabidopsis thaliana (Mouse-ear cress).